The following is a 393-amino-acid chain: Probable protein phosphatase 2C 68 (393 aa).

A PPM-type phosphatase domain is found at 56–359 (DFSIAVVQAN…DDITVVVIFI (304 aa)). Mn(2+) is bound by residues aspartate 87, glycine 88, aspartate 291, and aspartate 350.

Belongs to the PP2C family. Mg(2+) is required as a cofactor. The cofactor is Mn(2+).

The enzyme catalyses O-phospho-L-seryl-[protein] + H2O = L-seryl-[protein] + phosphate. The catalysed reaction is O-phospho-L-threonyl-[protein] + H2O = L-threonyl-[protein] + phosphate. May dephosphorylate and repress plasma membrane H(+)-ATPases (PM H(+)-ATPases, e.g. AHA1 and AHA2), thus influencing negatively plant growth and fitness. This is Probable protein phosphatase 2C 68 from Arabidopsis thaliana (Mouse-ear cress).